The following is a 288-amino-acid chain: 4-diphosphocytidyl-2-C-methyl-D-erythritol kinase (288 aa).

Residue Lys8 is part of the active site. An ATP-binding site is contributed by 90–100 (PFGAGLGGGSS). Asp132 is an active-site residue.

This sequence belongs to the GHMP kinase family. IspE subfamily.

The enzyme catalyses 4-CDP-2-C-methyl-D-erythritol + ATP = 4-CDP-2-C-methyl-D-erythritol 2-phosphate + ADP + H(+). The protein operates within isoprenoid biosynthesis; isopentenyl diphosphate biosynthesis via DXP pathway; isopentenyl diphosphate from 1-deoxy-D-xylulose 5-phosphate: step 3/6. Catalyzes the phosphorylation of the position 2 hydroxy group of 4-diphosphocytidyl-2C-methyl-D-erythritol. In Chlorobium chlorochromatii (strain CaD3), this protein is 4-diphosphocytidyl-2-C-methyl-D-erythritol kinase.